The primary structure comprises 724 residues: Phosphoribosylformylglycinamidine synthase subunit PurL (724 aa).

The active site involves His-46. Residues Tyr-49 and Lys-88 each coordinate ATP. Position 90 (Glu-90) interacts with Mg(2+). Substrate-binding positions include 91–94 (SHNH) and Arg-113. Catalysis depends on His-92, which acts as the Proton acceptor. Mg(2+) is bound at residue Asp-114. Residue Gln-237 coordinates substrate. Asp-265 lines the Mg(2+) pocket. Residue 309–311 (ESQ) participates in substrate binding. Residues Asp-489 and Gly-526 each coordinate ATP. Asn-527 serves as a coordination point for Mg(2+). Ser-529 contributes to the substrate binding site.

The protein belongs to the FGAMS family. In terms of assembly, monomer. Part of the FGAM synthase complex composed of 1 PurL, 1 PurQ and 2 PurS subunits.

The protein resides in the cytoplasm. The catalysed reaction is N(2)-formyl-N(1)-(5-phospho-beta-D-ribosyl)glycinamide + L-glutamine + ATP + H2O = 2-formamido-N(1)-(5-O-phospho-beta-D-ribosyl)acetamidine + L-glutamate + ADP + phosphate + H(+). Its pathway is purine metabolism; IMP biosynthesis via de novo pathway; 5-amino-1-(5-phospho-D-ribosyl)imidazole from N(2)-formyl-N(1)-(5-phospho-D-ribosyl)glycinamide: step 1/2. In terms of biological role, part of the phosphoribosylformylglycinamidine synthase complex involved in the purines biosynthetic pathway. Catalyzes the ATP-dependent conversion of formylglycinamide ribonucleotide (FGAR) and glutamine to yield formylglycinamidine ribonucleotide (FGAM) and glutamate. The FGAM synthase complex is composed of three subunits. PurQ produces an ammonia molecule by converting glutamine to glutamate. PurL transfers the ammonia molecule to FGAR to form FGAM in an ATP-dependent manner. PurS interacts with PurQ and PurL and is thought to assist in the transfer of the ammonia molecule from PurQ to PurL. This Granulibacter bethesdensis (strain ATCC BAA-1260 / CGDNIH1) protein is Phosphoribosylformylglycinamidine synthase subunit PurL.